Here is a 216-residue protein sequence, read N- to C-terminus: Glycerol uptake facilitator protein-like 6 (216 aa).

2 consecutive transmembrane segments (helical) span residues 5–25 and 30–50; these read LAEF…VVIA and LAIG…FGGI. Residues 56-58 carry the NPA 1 motif; that stretch reads NPA. A run of 3 helical transmembrane segments spans residues 72 to 92, 114 to 134, and 147 to 167; these read ADAI…SAAV, IGSG…LMVI, and FAGL…LNLT. Positions 172-174 match the NPA 2 motif; sequence NPA. The chain crosses the membrane as a helical span at residues 191 to 213; it reads LWVYILAPEVGAILAAFCARVMG.

Belongs to the MIP/aquaporin (TC 1.A.8) family.

It localises to the cell membrane. Functionally, probable transporter that facilitates the transmembrane diffusion of an unknown substrate. Is not permeable to water, dihydroxyacetone, glycerol, urea, H(2)O(2) and D/L-lactic acid. The polypeptide is Glycerol uptake facilitator protein-like 6 (Lactiplantibacillus plantarum (strain ATCC BAA-793 / NCIMB 8826 / WCFS1) (Lactobacillus plantarum)).